We begin with the raw amino-acid sequence, 107 residues long: Universal stress protein B homolog (107 aa).

2 helical membrane-spanning segments follow: residues 6 to 26 and 86 to 106; these read TILF…LTAL and VREL…AAFI.

This sequence belongs to the universal stress protein B family.

It is found in the cell inner membrane. In Vibrio parahaemolyticus serotype O3:K6 (strain RIMD 2210633), this protein is Universal stress protein B homolog.